The chain runs to 405 residues: Acetylornithine aminotransferase 1 (405 aa).

Residues 103–104 (GA) and Phe136 contribute to the pyridoxal 5'-phosphate site. Arg139 is a binding site for N(2)-acetyl-L-ornithine. 221-224 (DEVQ) is a pyridoxal 5'-phosphate binding site. Position 250 is an N6-(pyridoxal phosphate)lysine (Lys250). Ser278 lines the N(2)-acetyl-L-ornithine pocket. Thr279 provides a ligand contact to pyridoxal 5'-phosphate.

Belongs to the class-III pyridoxal-phosphate-dependent aminotransferase family. ArgD subfamily. In terms of assembly, homodimer. Requires pyridoxal 5'-phosphate as cofactor.

The protein localises to the cytoplasm. The catalysed reaction is N(2)-acetyl-L-ornithine + 2-oxoglutarate = N-acetyl-L-glutamate 5-semialdehyde + L-glutamate. Its pathway is amino-acid biosynthesis; L-arginine biosynthesis; N(2)-acetyl-L-ornithine from L-glutamate: step 4/4. The protein is Acetylornithine aminotransferase 1 of Bradyrhizobium diazoefficiens (strain JCM 10833 / BCRC 13528 / IAM 13628 / NBRC 14792 / USDA 110).